A 272-amino-acid polypeptide reads, in one-letter code: MSSREELGVAVAGLGAIGKALANRLARNEVAGCRLSAVSGRDPGRTADFIASLPRPVPAVPLHELPRHADIVVECAPAAVLPQIVEPVLDAGKKVIVLSVGALLEFPELFRKAGSSDGQILVPTGALLGLDAVTAAAEGRIESVKMVSRKPPIGFKGAPILAERNLDIDGLTEPLLLYSGSARAAARGFPANLNVAVALSLAGIGPDETQLEVWADPGVVRNTHTIEVVSDAALLRMTIENIPSENPKTGRITAQSVMAMLRKMSAPVRVGT.

NAD(+)-binding residues include Ala126 and Asn194. His224 is a catalytic residue.

The protein belongs to the L-aspartate dehydrogenase family.

It carries out the reaction L-aspartate + NADP(+) + H2O = oxaloacetate + NH4(+) + NADPH + H(+). The catalysed reaction is L-aspartate + NAD(+) + H2O = oxaloacetate + NH4(+) + NADH + H(+). It participates in cofactor biosynthesis; NAD(+) biosynthesis; iminoaspartate from L-aspartate (dehydrogenase route): step 1/1. Its function is as follows. Specifically catalyzes the NAD or NADP-dependent dehydrogenation of L-aspartate to iminoaspartate. The sequence is that of L-aspartate dehydrogenase 3 from Bordetella bronchiseptica (strain ATCC BAA-588 / NCTC 13252 / RB50) (Alcaligenes bronchisepticus).